The primary structure comprises 493 residues: Probable cytosol aminopeptidase (493 aa).

Residues K260 and D265 each coordinate Mn(2+). Residue K272 is part of the active site. Mn(2+)-binding residues include D283, D342, and E344. The active site involves R346.

This sequence belongs to the peptidase M17 family. It depends on Mn(2+) as a cofactor.

It localises to the cytoplasm. The catalysed reaction is Release of an N-terminal amino acid, Xaa-|-Yaa-, in which Xaa is preferably Leu, but may be other amino acids including Pro although not Arg or Lys, and Yaa may be Pro. Amino acid amides and methyl esters are also readily hydrolyzed, but rates on arylamides are exceedingly low.. It catalyses the reaction Release of an N-terminal amino acid, preferentially leucine, but not glutamic or aspartic acids.. Its function is as follows. Presumably involved in the processing and regular turnover of intracellular proteins. Catalyzes the removal of unsubstituted N-terminal amino acids from various peptides. This is Probable cytosol aminopeptidase from Clostridium perfringens (strain 13 / Type A).